The following is a 416-amino-acid chain: Phosphoglycerate kinase (416 aa).

(2R)-3-phosphoglycerate contacts are provided by valine 23, aspartate 24, phenylalanine 25, asparagine 26, glutamine 38, arginine 39, serine 62, histidine 63, glycine 65, arginine 66, leucine 121, arginine 122, histidine 168, and arginine 169. Glycine 212 is a binding site for ADP. CDP is bound at residue glycine 212. Positions 213 and 214 each coordinate AMP. Alanine 213 contributes to the ATP binding site. Alanine 213 is a Mg(2+) binding site. 2 residues coordinate Mg(2+): alanine 216 and aspartate 217. Position 217 (aspartate 217) interacts with CDP. Lysine 218 contacts AMP. Lysine 218 serves as a coordination point for ATP. Residue glycine 236 coordinates ADP. A CDP-binding site is contributed by glycine 236. AMP is bound by residues glycine 237 and glycine 311. The ATP site is built by glycine 237 and glycine 311. Glycine 336 and phenylalanine 341 together coordinate CDP. Phenylalanine 341 provides a ligand contact to ADP. AMP is bound at residue glutamate 342. ATP is bound by residues glutamate 342, aspartate 373, and threonine 374. Aspartate 373 serves as a coordination point for Mg(2+).

Belongs to the phosphoglycerate kinase family. Monomer. Mg(2+) serves as cofactor.

The protein localises to the cytoplasm. It localises to the mitochondrion. The catalysed reaction is (2R)-3-phosphoglycerate + ATP = (2R)-3-phospho-glyceroyl phosphate + ADP. It functions in the pathway carbohydrate degradation; glycolysis; pyruvate from D-glyceraldehyde 3-phosphate: step 2/5. In terms of biological role, catalyzes one of the two ATP producing reactions in the glycolytic pathway via the reversible conversion of 1,3-diphosphoglycerate to 3-phosphoglycerate. Both L- and D- forms of purine and pyrimidine nucleotides can be used as substrates, but the activity is much lower on pyrimidines. Negatively regulates the biosynthesis of acetyl-CoA from pyruvate in the mitochondrion. This Candida glabrata (strain ATCC 2001 / BCRC 20586 / JCM 3761 / NBRC 0622 / NRRL Y-65 / CBS 138) (Yeast) protein is Phosphoglycerate kinase (PGK1).